Consider the following 1470-residue polypeptide: Niemann-Pick type C1-related protein (1470 aa).

Residues 1 to 3 (MFV) are Cytoplasmic-facing. The stretch at 4–34 (KNFIHKLKELKQKSLDKFANLLYDYGGYVYD) is an intramembrane region. Residue arginine 35 is a topological domain, cytoplasmic. The chain crosses the membrane as a helical span at residues 36-56 (PCTFIICSLICCLLLTCGFYF). The Extracellular segment spans residues 57-493 (KEHEKDIYKL…DEVDRISKID (437 aa)). Residues asparagine 78, asparagine 165, asparagine 294, and asparagine 361 are each glycosylated (N-linked (GlcNAc...) asparagine). Residues 494–514 (NLTRLLLLIGVLLIFMYALFN) traverse the membrane as a helical segment. Positions 494–653 (NLTRLLLLIG…LTFLLSFLCI (160 aa)) constitute an SSD domain. The Cytoplasmic portion of the chain corresponds to 515–524 (NVTSVLYRSK). The chain crosses the membrane as a helical span at residues 525–549 (PLCAVMGIFCGFLGFLSGSGFLYFL). Residues 550 to 554 (GVKSV) lie on the Extracellular side of the membrane. A helical transmembrane segment spans residues 555 to 582 (PPAETVPFLVIGVGVDDVFVILNSYSLL). Topologically, residues 583-587 (FMVKD) are cytoplasmic. The helical transmembrane segment at 588–619 (NKKRIQMCLKDSALAITVTTLTNIIAFLISAI) threads the bilayer. The Extracellular portion of the chain corresponds to 620–622 (SPF). A helical transmembrane segment spans residues 623–659 (YSICAFSLFTASSLFFGYLMVLTFLLSFLCIEAKLEK). Residues 660–663 (KKRN) are Cytoplasmic-facing. An intramembrane segment occupies 664–673 (IFTGTFHLFR). At 674–1057 (SIFMKSSKKN…IYEEPKGNIG (384 aa)) the chain is on the cytoplasmic side. An intramembrane segment occupies 1058–1073 (KYFRSLVKNYYVPFLS). Residue serine 1074 is a topological domain, cytoplasmic. A helical membrane pass occupies residues 1075-1098 (RFGKTIVYIMFTIIIAMSIYGCTL). Over 1099–1300 (MKKGIKYDKA…NHNVQMVCFH (202 aa)) the chain is Extracellular. Asparagine 1218 carries N-linked (GlcNAc...) asparagine glycosylation. The chain crosses the membrane as a helical span at residues 1301 to 1334 (LSSIFNETDESIIEVTLINLGITILTILVVTAYI). Residues 1335–1337 (IKG) are Cytoplasmic-facing. The helical transmembrane segment at 1338-1361 (FYSCVIIALIIFLIDLCIFGFMCL) threads the bilayer. Residues 1362–1367 (CGITMN) lie on the Extracellular side of the membrane. The helical transmembrane segment at 1368 to 1394 (IISMVILVLSVGFSIDHTSHIVQAFSH) threads the bilayer. The Cytoplasmic portion of the chain corresponds to 1395–1399 (SMGRT). Residues 1400–1431 (RDEKMKESLHLMIGPVLHSGLSTWFVISTLFF) traverse the membrane as a helical segment. At 1432 to 1434 (SNK) the chain is on the extracellular side. The helical transmembrane segment at 1435–1466 (DFTVIFFQTLSLVLFFSITFSSMFLPVLLSSF) threads the bilayer. Residues 1467 to 1470 (GPLH) are Cytoplasmic-facing.

Belongs to the patched family.

The protein localises to the cell membrane. It carries out the reaction cholesterol(in) = cholesterol(out). Facilitates cholesterol efflux from membranes in a pH-dependent manner. Required for maintaining normal parasite plasma membrane lipid composition. Required for the proper functioning of digestive vacuole. Required for the viability of blood-stage parasites. In Plasmodium falciparum (isolate 3D7), this protein is Niemann-Pick type C1-related protein.